The chain runs to 98 residues: Homeobox protein SMOX-4 (98 aa).

A DNA-binding region (homeobox) is located at residues 37–96; that stretch reads SFRNRTAFTDYQLICLEREFSHIQYLSRIDRIHLAQNLNLTEKQVKIWFQNRRVRWRKRN.

It is found in the nucleus. In Schistosoma mansoni (Blood fluke), this protein is Homeobox protein SMOX-4 (SMOX-4).